Here is a 443-residue protein sequence, read N- to C-terminus: Thymidine phosphorylase (443 aa).

It belongs to the thymidine/pyrimidine-nucleoside phosphorylase family. Homodimer.

It catalyses the reaction thymidine + phosphate = 2-deoxy-alpha-D-ribose 1-phosphate + thymine. The protein operates within pyrimidine metabolism; dTMP biosynthesis via salvage pathway; dTMP from thymine: step 1/2. In terms of biological role, the enzymes which catalyze the reversible phosphorolysis of pyrimidine nucleosides are involved in the degradation of these compounds and in their utilization as carbon and energy sources, or in the rescue of pyrimidine bases for nucleotide synthesis. This is Thymidine phosphorylase from Shewanella baltica (strain OS155 / ATCC BAA-1091).